Here is a 556-residue protein sequence, read N- to C-terminus: Arginine--tRNA ligase (556 aa).

The 'HIGH' region motif lies at 134-144 (ANPTGPLHIGH).

This sequence belongs to the class-I aminoacyl-tRNA synthetase family. In terms of assembly, monomer.

The protein localises to the cytoplasm. It carries out the reaction tRNA(Arg) + L-arginine + ATP = L-arginyl-tRNA(Arg) + AMP + diphosphate. In Micrococcus luteus (strain ATCC 4698 / DSM 20030 / JCM 1464 / CCM 169 / CCUG 5858 / IAM 1056 / NBRC 3333 / NCIMB 9278 / NCTC 2665 / VKM Ac-2230) (Micrococcus lysodeikticus), this protein is Arginine--tRNA ligase.